The following is a 419-amino-acid chain: MSITGIKGFNDLLPAESGLWQFIEQTARQVFARYGFNEIRVPIVEKTELFCRSIGDTTDIVEKEMYTFMDKGGSSLTLRPEGTASVMRALIEHKLYALDSINKLYYMGPMFRHERPQKGRYRQFHQIGAEVTGAADPLIDAQVLLMVSRLFQEFGLTEPRLQINSLGCPACRPAYRQALVAFLAERQEALCEDCRRRQGTNPLRALDCKVPGCIEATQGAPAMVEHLCNECDQHFSMVQNYLTAAEVPFSLNPRMVRGLDYYTRTTFELVTGLLGAQSAVAAGGRYDGLVEQLGGPAVPGIGFALGVERVALLLGDRSFEKTPDLFIAVMGDAARTAGFRLMAALQDQGFWVETDCEGKSLKSQMRRADKLKSRYSIVLGDTELVAGSGTLKRMADGNQQPVHLEAATIAAAITGGGQT.

Belongs to the class-II aminoacyl-tRNA synthetase family. In terms of assembly, homodimer.

It localises to the cytoplasm. The enzyme catalyses tRNA(His) + L-histidine + ATP = L-histidyl-tRNA(His) + AMP + diphosphate + H(+). This Trichlorobacter lovleyi (strain ATCC BAA-1151 / DSM 17278 / SZ) (Geobacter lovleyi) protein is Histidine--tRNA ligase.